A 1070-amino-acid polypeptide reads, in one-letter code: DNA-directed RNA polymerase subunit beta (1070 aa).

It belongs to the RNA polymerase beta chain family. In plastids the minimal PEP RNA polymerase catalytic core is composed of four subunits: alpha, beta, beta', and beta''. When a (nuclear-encoded) sigma factor is associated with the core the holoenzyme is formed, which can initiate transcription.

It is found in the plastid. The protein resides in the chloroplast. It catalyses the reaction RNA(n) + a ribonucleoside 5'-triphosphate = RNA(n+1) + diphosphate. Functionally, DNA-dependent RNA polymerase catalyzes the transcription of DNA into RNA using the four ribonucleoside triphosphates as substrates. The polypeptide is DNA-directed RNA polymerase subunit beta (Phalaenopsis aphrodite subsp. formosana (Moth orchid)).